A 141-amino-acid polypeptide reads, in one-letter code: Hemoglobin subunit alpha (141 aa).

A Globin domain is found at 1–141 (VLSATDKANV…VATVLTSKYR (141 aa)). The residue at position 3 (S3) is a Phosphoserine. N6-succinyllysine is present on residues K7 and K11. K16 is modified (N6-acetyllysine; alternate). At K16 the chain carries N6-succinyllysine; alternate. The residue at position 24 (Y24) is a Phosphotyrosine. Position 40 is an N6-succinyllysine (K40). Position 58 (H58) interacts with O2. H87 contributes to the heme b binding site. S102 is modified (phosphoserine). Phosphothreonine is present on T108. Residue S124 is modified to Phosphoserine. Phosphothreonine occurs at positions 134 and 137. At S138 the chain carries Phosphoserine.

This sequence belongs to the globin family. In terms of assembly, heterotetramer of two alpha chains and two beta chains. Red blood cells.

Involved in oxygen transport from the lung to the various peripheral tissues. Functionally, hemopressin acts as an antagonist peptide of the cannabinoid receptor CNR1. Hemopressin-binding efficiently blocks cannabinoid receptor CNR1 and subsequent signaling. This is Hemoglobin subunit alpha (HBA) from Erinaceus europaeus (Western European hedgehog).